The sequence spans 686 residues: Leucine-rich repeat-containing protein 49 (686 aa).

LRR repeat units lie at residues 113–134 (HLRL…SNLQ), 135–156 (KLIS…STLR), 157–178 (CLRV…ENLK), 179–200 (SLDV…NHLC), 201–222 (ELRV…NGLD), 223–244 (SLTE…DNLP), and 245–266 (CLQH…SCLA). The region spanning 279-317 (NPIAQESWYKHTVLQNMMQLRQLDMKRITEEERRMASVL) is the LRRCT domain. A coiled-coil region spans residues 303–341 (MKRITEEERRMASVLAKKEEEKKRESHKQSLLKEKKRLT). Residues 360–388 (ATNEDRKDSDSPQDPCQIDGSTLSAFPEE) form a disordered region.

In terms of assembly, part of the neuronal tubulin polyglutamylase complex which contains TPGS1, TPGS2, TTLL1, LRRC49 and NICN1. Interacts with PCM1; TTLL1, TPGS1, TPGS2 and LRRC49.

Its subcellular location is the cytoplasm. The protein resides in the cytoskeleton. The protein localises to the microtubule organizing center. It localises to the centrosome. It is found in the centriolar satellite. Its function is as follows. Subunit of the tubulin polyglutamylase complex (TPGC). The complex mediates cilia and flagella polyglutamylation which is essential for their biogenesis and motility. This Homo sapiens (Human) protein is Leucine-rich repeat-containing protein 49.